The primary structure comprises 467 residues: Inactive pancreatic lipase-related protein 1 (467 aa).

An N-terminal signal peptide occupies residues 1–17; the sequence is MVSIWTIALFLLGAAKA. 2 disulfides stabilise this stretch: Cys21/Cys27 and Cys109/Cys120. The N-linked (GlcNAc...) asparagine glycan is linked to Asn157. The Nucleophile role is filled by Ser171. Asp194 (charge relay system) is an active-site residue. Residues Glu205, Arg208, Asp210, and Asp213 each contribute to the Ca(2+) site. A disulfide bridge links Cys255 with Cys279. The active-site Charge relay system is the His281. 3 disulfides stabilise this stretch: Cys303/Cys314, Cys317/Cys322, and Cys451/Cys467. In terms of domain architecture, PLAT spans 356–467; it reads WRYGVSITLS…EDVLLTLTPC (112 aa).

Belongs to the AB hydrolase superfamily. Lipase family. Detected in pancreas (at protein level).

It is found in the secreted. Functionally, may function as inhibitor of dietary triglyceride digestion. Lacks detectable lipase activity towards triglycerides, diglycerides, phosphatidylcholine, galactolipids or cholesterol esters (in vitro). The sequence is that of Inactive pancreatic lipase-related protein 1 (PNLIPRP1) from Canis lupus familiaris (Dog).